Here is a 439-residue protein sequence, read N- to C-terminus: L-cysteine:1D-myo-inositol 2-amino-2-deoxy-alpha-D-glucopyranoside ligase 2 (439 aa).

Zn(2+) is bound at residue cysteine 60. L-cysteinyl-5'-AMP is bound by residues 60 to 63, threonine 75, and 98 to 100; these read CGIT and NVT. Positions 62 to 72 match the 'HIGH' region motif; the sequence is ITPYDSTHLGH. A 'ERGGDP' region motif is present at residues 203 to 208; the sequence is ERGGDP. Tryptophan 243 lines the L-cysteinyl-5'-AMP pocket. Position 247 (cysteine 247) interacts with Zn(2+). Position 265–267 (265–267) interacts with L-cysteinyl-5'-AMP; that stretch reads GVD. Histidine 272 contacts Zn(2+). Isoleucine 299 contacts L-cysteinyl-5'-AMP. Residues 305-309 carry the 'KMSKS' region motif; that stretch reads KMSKS.

This sequence belongs to the class-I aminoacyl-tRNA synthetase family. MshC subfamily. In terms of assembly, monomer. The cofactor is Zn(2+).

The enzyme catalyses 1D-myo-inositol 2-amino-2-deoxy-alpha-D-glucopyranoside + L-cysteine + ATP = 1D-myo-inositol 2-(L-cysteinylamino)-2-deoxy-alpha-D-glucopyranoside + AMP + diphosphate + H(+). Its function is as follows. Catalyzes the ATP-dependent condensation of GlcN-Ins and L-cysteine to form L-Cys-GlcN-Ins. In Corynebacterium urealyticum (strain ATCC 43042 / DSM 7109), this protein is L-cysteine:1D-myo-inositol 2-amino-2-deoxy-alpha-D-glucopyranoside ligase 2.